A 937-amino-acid polypeptide reads, in one-letter code: DNA mismatch repair protein msh-2 (937 aa).

659–666 serves as a coordination point for ATP; sequence GPNMGGKS.

Belongs to the DNA mismatch repair MutS family. In terms of assembly, heterodimer of msh2 and msh6.

It localises to the nucleus. Functionally, involved in post-replicative DNA-mismatch repair. Binds to mismatch-containing DNA. The chain is DNA mismatch repair protein msh-2 (msh-2) from Neurospora crassa (strain ATCC 24698 / 74-OR23-1A / CBS 708.71 / DSM 1257 / FGSC 987).